A 138-amino-acid chain; its full sequence is DNA-directed RNA polymerase subunit omega (138 aa).

The disordered stretch occupies residues 117–138 (NLLGRDNFFSTPENRNTSNTDS). Residues 124–138 (FFSTPENRNTSNTDS) are compositionally biased toward polar residues.

Belongs to the RNA polymerase subunit omega family. As to quaternary structure, the RNAP catalytic core consists of 2 alpha, 1 beta, 1 beta' and 1 omega subunit. When a sigma factor is associated with the core the holoenzyme is formed, which can initiate transcription.

It catalyses the reaction RNA(n) + a ribonucleoside 5'-triphosphate = RNA(n+1) + diphosphate. Functionally, promotes RNA polymerase assembly. Latches the N- and C-terminal regions of the beta' subunit thereby facilitating its interaction with the beta and alpha subunits. The sequence is that of DNA-directed RNA polymerase subunit omega from Ehrlichia canis (strain Jake).